Consider the following 874-residue polypeptide: Alanine--tRNA ligase (874 aa).

Zn(2+)-binding residues include His-562, His-566, Cys-664, and His-668.

Belongs to the class-II aminoacyl-tRNA synthetase family. The cofactor is Zn(2+).

It is found in the cytoplasm. It carries out the reaction tRNA(Ala) + L-alanine + ATP = L-alanyl-tRNA(Ala) + AMP + diphosphate. Its function is as follows. Catalyzes the attachment of alanine to tRNA(Ala) in a two-step reaction: alanine is first activated by ATP to form Ala-AMP and then transferred to the acceptor end of tRNA(Ala). Also edits incorrectly charged Ser-tRNA(Ala) and Gly-tRNA(Ala) via its editing domain. In Shewanella sp. (strain MR-7), this protein is Alanine--tRNA ligase.